The following is a 294-amino-acid chain: 4-hydroxy-tetrahydrodipicolinate synthase (294 aa).

T47 is a binding site for pyruvate. The active-site Proton donor/acceptor is the Y135. The Schiff-base intermediate with substrate role is filled by K163. Pyruvate is bound at residue V205.

The protein belongs to the DapA family. As to quaternary structure, homotetramer; dimer of dimers.

It localises to the cytoplasm. It carries out the reaction L-aspartate 4-semialdehyde + pyruvate = (2S,4S)-4-hydroxy-2,3,4,5-tetrahydrodipicolinate + H2O + H(+). The protein operates within amino-acid biosynthesis; L-lysine biosynthesis via DAP pathway; (S)-tetrahydrodipicolinate from L-aspartate: step 3/4. Its function is as follows. Catalyzes the condensation of (S)-aspartate-beta-semialdehyde [(S)-ASA] and pyruvate to 4-hydroxy-tetrahydrodipicolinate (HTPA). The polypeptide is 4-hydroxy-tetrahydrodipicolinate synthase (Rickettsia canadensis (strain McKiel)).